The sequence spans 376 residues: Histidinol-phosphate aminotransferase 1 (376 aa).

At Lys235 the chain carries N6-(pyridoxal phosphate)lysine.

The protein belongs to the class-II pyridoxal-phosphate-dependent aminotransferase family. Histidinol-phosphate aminotransferase subfamily. Homodimer. Pyridoxal 5'-phosphate is required as a cofactor.

The enzyme catalyses L-histidinol phosphate + 2-oxoglutarate = 3-(imidazol-4-yl)-2-oxopropyl phosphate + L-glutamate. Its pathway is amino-acid biosynthesis; L-histidine biosynthesis; L-histidine from 5-phospho-alpha-D-ribose 1-diphosphate: step 7/9. This chain is Histidinol-phosphate aminotransferase 1, found in Cupriavidus pinatubonensis (strain JMP 134 / LMG 1197) (Cupriavidus necator (strain JMP 134)).